A 536-amino-acid chain; its full sequence is Phosphoenolpyruvate carboxykinase (ATP) (536 aa).

The substrate site is built by Arg61, Tyr195, and Lys201. ATP-binding positions include Lys201, His220, and 236–244; that span reads GLSGTGKTT. Mn(2+) is bound by residues Lys201 and His220. Asp257 provides a ligand contact to Mn(2+). Positions 285, 322, and 447 each coordinate ATP. Substrate is bound at residue Arg322.

This sequence belongs to the phosphoenolpyruvate carboxykinase (ATP) family. Mn(2+) is required as a cofactor.

The protein resides in the cytoplasm. The enzyme catalyses oxaloacetate + ATP = phosphoenolpyruvate + ADP + CO2. It functions in the pathway carbohydrate biosynthesis; gluconeogenesis. Its function is as follows. Involved in the gluconeogenesis. Catalyzes the conversion of oxaloacetate (OAA) to phosphoenolpyruvate (PEP) through direct phosphoryl transfer between the nucleoside triphosphate and OAA. The sequence is that of Phosphoenolpyruvate carboxykinase (ATP) from Rhizobium etli (strain ATCC 51251 / DSM 11541 / JCM 21823 / NBRC 15573 / CFN 42).